The primary structure comprises 62 residues: [Ser6, Val10, Asp11]-phyllokinin (62 aa).

An N-terminal signal peptide occupies residues 1-22 (MSFLKKSLLLVLFLGLVSFSIC). Positions 23–51 (EEEKRETEEEENEDDMDEESEEKKRESPD) are excised as a propeptide. The interval 24-62 (EEKRETEEEENEDDMDEESEEKKRESPDRPPGFSPFRVD) is disordered. The span at 30-42 (EEEENEDDMDEES) shows a compositional bias: acidic residues.

Belongs to the frog skin active peptide (FSAP) family. Bradykinin-related peptide subfamily. In terms of tissue distribution, expressed by the skin glands.

It localises to the secreted. Induces relaxation of rat smooth muscle from tail artery and contraction of that from ileum, urinary bladder and uterus. Binds to both bradykinin receptor B1 (BDKRB1) and B2 (BDKRB2). The polypeptide is [Ser6, Val10, Asp11]-phyllokinin (Agalychnis spurrelli (Gliding leaf frog)).